Reading from the N-terminus, the 106-residue chain is Putative double-stranded DNA mimic protein VP1949 (106 aa).

It belongs to the putative dsDNA mimic protein family.

Functionally, may act as a double-stranded DNA (dsDNA) mimic. Probably regulates the activity of a dsDNA-binding protein. This chain is Putative double-stranded DNA mimic protein VP1949, found in Vibrio parahaemolyticus serotype O3:K6 (strain RIMD 2210633).